Reading from the N-terminus, the 418-residue chain is Intracellular coagulation inhibitor 1 (418 aa).

A signal peptide spans 1 to 24 (MKLGDWKFCLLLFQLMFLTNVCLS). Residues asparagine 49 and asparagine 404 are each glycosylated (N-linked (GlcNAc...) asparagine).

This sequence belongs to the serpin family. Monomer. Forms a covalent heterodimer with clotting factor C. Interacts with big defensin. In terms of processing, N-glycosylated. Expressed in hemocytes (at protein level).

It is found in the secreted. In terms of biological role, serine protease inhibitor that specifically inhibits clotting factor C. Does not inhibit clotting factor B or proclotting enzyme. The protein is Intracellular coagulation inhibitor 1 of Tachypleus tridentatus (Japanese horseshoe crab).